A 134-amino-acid chain; its full sequence is Complexin-1 (134 aa).

Disordered stretches follow at residues 1–60 (MEFV…AERE) and 74–113 (KKEE…EEED). The segment covering 15–60 (DMGKMLGGDEEKDPDAAKKEEERQEALRQAEEERKAKYAKMEAERE) has biased composition (basic and acidic residues). Positions 29 to 69 (DAAKKEEERQEALRQAEEERKAKYAKMEAEREAVRQGIRDK) form a coiled coil. Residues 48 to 70 (RKAKYAKMEAEREAVRQGIRDKY) form an interaction with the SNARE complex region.

This sequence belongs to the complexin/synaphin family. As to quaternary structure, binds to the SNARE core complex containing SNAP25, VAMP2 and STX1A. As to expression, nervous system. In hippocampus and cerebellum, expressed mainly by inhibitory neurons. Overexpressed in substantia nigra from patients with Parkinson disease.

The protein resides in the cytoplasm. It is found in the cytosol. The protein localises to the perikaryon. It localises to the presynapse. In terms of biological role, positively regulates a late step in exocytosis of various cytoplasmic vesicles, such as synaptic vesicles and other secretory vesicles. Organizes the SNAREs into a cross-linked zigzag topology that, when interposed between the vesicle and plasma membranes, is incompatible with fusion, thereby preventing SNAREs from releasing neurotransmitters until an action potential arrives at the synapse. Also involved in glucose-induced secretion of insulin by pancreatic beta-cells. Essential for motor behavior. This is Complexin-1 (CPLX1) from Homo sapiens (Human).